The following is a 149-amino-acid chain: Calmodulin (149 aa).

Alanine 2 is subject to N-acetylalanine. EF-hand domains lie at 8 to 43 (EQIA…LGQN), 44 to 79 (PTEA…KMKD), 81 to 116 (DSEE…LGEK), and 117 to 149 (LTDE…MTSK). Aspartate 21, aspartate 23, aspartate 25, threonine 27, glutamate 32, aspartate 57, aspartate 59, aspartate 61, threonine 63, glutamate 68, aspartate 94, aspartate 96, asparagine 98, and glutamate 105 together coordinate Ca(2+). N6,N6,N6-trimethyllysine is present on lysine 116. Aspartate 130, aspartate 132, aspartate 134, glutamine 136, and glutamate 141 together coordinate Ca(2+).

It belongs to the calmodulin family.

Functionally, calmodulin mediates the control of a large number of enzymes, ion channels and other proteins by Ca(2+). Among the enzymes to be stimulated by the calmodulin-Ca(2+) complex are a number of protein kinases and phosphatases. The protein is Calmodulin of Pyuridae sp. (Sea squirt).